The sequence spans 74 residues: Putative membrane protein insertion efficiency factor (74 aa).

Belongs to the UPF0161 family.

It is found in the cell inner membrane. Could be involved in insertion of integral membrane proteins into the membrane. In Anaeromyxobacter sp. (strain Fw109-5), this protein is Putative membrane protein insertion efficiency factor.